The sequence spans 881 residues: MRGSALLDLILFLLVSPLAHSFKGSEISKFYDKSISNQISQSDRESGYVLVSTVDGSISLVDMSSQKLDWTFHTNEPIYSSYQAPHYHYTTDEERSSVLGDDFYMDCDKDWRLYNSSVRKGKRVNEIVDASEFIGTLPYTSTDRIVLGKKDTSVFLLDWKTGKLVKRYRMDELYSNTVVENDKEKAIVLSKEAPLLFGSGFKKSEDFPELVYIERKDFKIQCISKFGDVLWSVSYAKMEAKLQNHESVQFISGLSSSVGKNQFPLSYTTSVPMVQLRNVKYETLFPRLGFLDEALYLPFQDRKPNQLAIGDGNQLTLPGNKEAEEVLSLPLPETVISQITDIIDGSTKQAGFASKFSGLIVLIFGFCVTMLSVCGLFFYRLRQSIRIKEPYVSEVPIATPKKKKSKKNGTTKAVHKKENGFISGGNKDPSHEENEKRLLTAFPGLNNSSAEGYRVGKLFVSNKEIAKGSNGTVVLEGSYEGRLVAVKRLVQSHHDVAQKEILNLMASDKHSNIVRWYGVDQDEHFIYISLELCACSLNDLIYASSALLESPMASSSIHSIQINPIFENGKGVELWKENGHPSPVLLKLMRDIVAGLVHLHDIGIVHRDLKPQNVLIVKNSSLCAKLSDMGISKRLPADTSALTRNSTGLGSGSSGWQAPEQLRNERQTRAVDLFSLGCVLFFCMTGGKHPYGDNYERDVNVLNDQKDLFLIESLPEAVHLLTGLLNPDPNLRPRAQDVMHHPLFWNSDMRLSFLRDASDRVELENREEGSQLLAALESTAAVTLNGRWDEKLDSIFLDNIGRYRRYKFDSIRDLLRVIRNKLNHYRELPKELQELLGSVPEGFERYFSSRFPKLLIQVYTVLFDYCNNEEFFFKYSKTTVF.

The signal sequence occupies residues 1–21; that stretch reads MRGSALLDLILFLLVSPLAHS. The Lumenal portion of the chain corresponds to 22-357; it reads FKGSEISKFY…KQAGFASKFS (336 aa). Asn115 carries an N-linked (GlcNAc...) asparagine glycan. Residues 358-378 traverse the membrane as a helical segment; that stretch reads GLIVLIFGFCVTMLSVCGLFF. Over 379–881 the chain is Cytoplasmic; the sequence is YRLRQSIRIK…FFKYSKTTVF (503 aa). The Protein kinase domain maps to 459-744; it reads FVSNKEIAKG…AQDVMHHPLF (286 aa). Residues 465–473 and Lys487 each bind ATP; that span reads IAKGSNGTV. The segment at 481–502 is ATP selon article; sequence GRLVAVKRLVQSHHDVAQKEIL. Catalysis depends on Asp608, which acts as the Proton acceptor. A disordered region spans residues 642–661; sequence LTRNSTGLGSGSSGWQAPEQ. The KEN domain maps to 747–878; it reads SDMRLSFLRD…EEFFFKYSKT (132 aa).

Belongs to the protein kinase superfamily. Ser/Thr protein kinase family. Homodimer; disulfide-linked. Dimer formation is driven by hydrophobic interactions within the N-terminal luminal domains and stabilized by disulfide bridges. Mg(2+) serves as cofactor. Autophosphorylated. Ubiquitous. Detected in the apical meristem, at leaf margins where vascular bundles end, in the anthers before pollen is formed and in the ovules at a very early stage of development. There is no expression in more mature embryos. Also strongly expressed in the cotyledons immediately after germination but not later on.

It is found in the endoplasmic reticulum membrane. The enzyme catalyses L-seryl-[protein] + ATP = O-phospho-L-seryl-[protein] + ADP + H(+). The catalysed reaction is L-threonyl-[protein] + ATP = O-phospho-L-threonyl-[protein] + ADP + H(+). With respect to regulation, the kinase domain is activated by trans-autophosphorylation. Kinase activity is required for activation of the endoribonuclease domain. Its function is as follows. Senses unfolded proteins in the lumen of the endoplasmic reticulum via its N-terminal domain which leads to enzyme auto-activation. The active endoribonuclease domain splices bZIP60 mRNA to generate a new C-terminus, converting it into a potent unfolded-protein response transcriptional activator which then induces transcription of UPR target genes. Involved in organ growth regulation. Plays a role in plant immunity and abiotic stress responses. Required for ER stress-induced autophagy. This chain is Serine/threonine-protein kinase/endoribonuclease IRE1b (IRE1B), found in Arabidopsis thaliana (Mouse-ear cress).